The chain runs to 292 residues: Sulfofructosephosphate aldolase (292 aa).

Lys-193 functions as the Schiff-base intermediate with substrate in the catalytic mechanism.

This sequence belongs to the aldolase LacD family. As to quaternary structure, homotetramer.

It carries out the reaction 6-deoxy-6-sulfo-D-fructose 1-phosphate = (2S)-3-sulfolactaldehyde + dihydroxyacetone phosphate. Cleaves 6-deoxy-6-sulfo-D-fructose 1-phosphate (SFP) to form dihydroxyacetone phosphate (DHAP) and 3-sulfolactaldehyde (SLA). The sequence is that of Sulfofructosephosphate aldolase (yihT) from Escherichia coli O157:H7.